The chain runs to 296 residues: Gamma-D-glutamyl-L-lysine dipeptidyl-peptidase (296 aa).

Substrate is bound by residues Tyr90, 199-201, and 218-219; these read DCS and DA. Residues 170–295 form the NlpC/P60 domain; it reads KGTAEDIIQT…ELCAVRRCFS (126 aa). Catalysis depends on Cys200, which acts as the Nucleophile. The Proton acceptor role is filled by His253. His265 is a catalytic residue.

This sequence belongs to the peptidase C40 family.

It catalyses the reaction The enzyme releases L-Ala-gamma-D-Glu dipeptides from cell wall peptides via cleavage of an L-Ala-gamma-D-Glu-|-L-Lys bond.. The protein operates within cell wall degradation; peptidoglycan degradation. Specifically hydrolyzes gamma-D-glutamyl-L-lysine bonds in murein peptides, releasing L-Ala-D-Glu. The polypeptide is Gamma-D-glutamyl-L-lysine dipeptidyl-peptidase (ykfC) (Bacillus subtilis (strain 168)).